The following is a 632-amino-acid chain: Chaperone protein HtpG (632 aa).

Positions 1 to 339 are a; substrate-binding; it reads MTQQTMSFQA…SSDLPLNVSR (339 aa). A b region spans residues 340-559; that stretch reads EILQESRDVK…DNDMSGYLQR (220 aa). Residues 560-632 form a c region; it reads MLKAAGQSAP…TNALLLSRAA (73 aa).

The protein belongs to the heat shock protein 90 family. Homodimer.

It localises to the cytoplasm. Functionally, molecular chaperone. Has ATPase activity. The polypeptide is Chaperone protein HtpG (Burkholderia pseudomallei (strain 668)).